A 266-amino-acid polypeptide reads, in one-letter code: Enoyl-CoA hydratase EchA19 (266 aa).

E120 is a catalytic residue. At K135 the chain carries N6-succinyllysine. E140 is a catalytic residue. N6-succinyllysine is present on K142.

The protein belongs to the enoyl-CoA hydratase/isomerase family. In terms of assembly, homotrimer; substrate probably binds in elongated tunnels between the subunits. Succinylated in vitro at pH 8.1, succinylation reduces specific activity of the enzyme 5.5-fold; succinyl-CoA is a downstream by-product of cholesterol degradation. Can be de-succinylated in vitro by NAD-dependent protein deacylase (AC P9WGG3). Succinylation may be a negative feedback regulator of cholesterol metabolism.

The catalysed reaction is (22E)-3-oxochola-4,22-dien-24-oyl-CoA + H2O = (22R)-hydroxy-3-oxo-chol-4-ene-24-oyl-CoA. The protein operates within steroid metabolism; cholesterol degradation. In terms of biological role, degradation of the cholesterol side chain involves 3 multistep beta-oxidation cycles, this may be involved in the second cycle. Hydrates 3-OCDO-CoA ((22E)-3-oxo-chol-4,22-dien-24-oyl-CoA) to make (22R)-HOCO-CoA (3-oxo-chol-4-ene-(22R)-hydroxy-24-oyl-CoA). Also acts on octenoyl-CoA. Not active on (E)-3-OCDS-CoA ((E)-3-oxocholest-4,24-dien-26-oyl-CoA) or 3-OPDC-CoA (3-oxo-4,17-pregnadiene-20-carboxyl-CoA). Hydrates the same substrate as ChsH3, but the 2 enzymes make different stereoisomers of the product. This Mycobacterium tuberculosis (strain ATCC 25618 / H37Rv) protein is Enoyl-CoA hydratase EchA19.